We begin with the raw amino-acid sequence, 245 residues long: MSQSTSVLRRNGFTFKQFFVAHDRCAMKVGTDGILLGAWAPVAGVKRCLDIGAGSGLLALMLAQRTDDSVMIDAVELESEAATQAQENINQSPWAERINIYPADIQQWITQQTARFDLIISNPPYYQQGVECATPQREQARYTTTLDHQSLLTCAAECITEEGFFCVVLPEQIGNGFTELALRMGWHLRLRTDVAENETRQPHRVLLAFSPQAGECYSDRLVIRGPDQSYSEAYTALTQAFYLFM.

This sequence belongs to the methyltransferase superfamily. tRNA (adenine-N(6)-)-methyltransferase family.

It localises to the cytoplasm. The enzyme catalyses adenosine(37) in tRNA1(Val) + S-adenosyl-L-methionine = N(6)-methyladenosine(37) in tRNA1(Val) + S-adenosyl-L-homocysteine + H(+). Specifically methylates the adenine in position 37 of tRNA(1)(Val) (anticodon cmo5UAC). The protein is tRNA1(Val) (adenine(37)-N6)-methyltransferase of Escherichia fergusonii (strain ATCC 35469 / DSM 13698 / CCUG 18766 / IAM 14443 / JCM 21226 / LMG 7866 / NBRC 102419 / NCTC 12128 / CDC 0568-73).